The chain runs to 230 residues: Potassium/proton antiporter CemA (230 aa).

4 consecutive transmembrane segments (helical) span residues 7-27, 106-126, 145-165, and 181-201; these read LPSLLYLVFIVLLPWGVSFSF, IILHFSTNIICLAILSGFFFL, LNDSIKAFFILLVTDFFVGFH, and LGWAPNELIFTIFVCSFPVIL.

The protein belongs to the CemA family.

It localises to the plastid. Its subcellular location is the chloroplast inner membrane. The enzyme catalyses K(+)(in) + H(+)(out) = K(+)(out) + H(+)(in). Contributes to K(+)/H(+) antiport activity by supporting proton efflux to control proton extrusion and homeostasis in chloroplasts in a light-dependent manner to modulate photosynthesis. Prevents excessive induction of non-photochemical quenching (NPQ) under continuous-light conditions. Indirectly promotes efficient inorganic carbon uptake into chloroplasts. This chain is Potassium/proton antiporter CemA, found in Lolium perenne (Perennial ryegrass).